The primary structure comprises 476 residues: Zinc finger CCCH domain-containing protein 6 (476 aa).

The span at 1–10 (MEQPHAAAAA) shows a compositional bias: low complexity. The disordered stretch occupies residues 1–57 (MEQPHAAAAAAGGGEGEGGASPDTGLEGPMWRMGLGGGGGGGGGGGGGDGDAAGRLP). Positions 34–51 (GLGGGGGGGGGGGGGDGD) are enriched in gly residues. 3 consecutive C3H1-type zinc fingers follow at residues 59 to 87 (RPGEEDCVYYLRTGACGFGDRCRYNHPRD), 108 to 136 (RAGQPICEYYMKTGTCKFGTNCKYHHPKQ), and 153 to 181 (RLGEKECSYYMKTGQCKFGTTCKFHHPEF). The segment covering 290–301 (SSTGQSSNNQQE) has biased composition (polar residues). A disordered region spans residues 290 to 309 (SSTGQSSNNQQEHGFPERPG). 2 consecutive C3H1-type zinc fingers follow at residues 307–335 (RPGQPDCQYYMRTGDCKFGATCKYHHPRE) and 353–381 (RPGAQPCAYYAQNGYCRYGVACKYDHPMG). The segment at 456 to 476 (TMMRAQTNTTSGGSSSPGGGR) is disordered.

The protein localises to the nucleus. In Oryza sativa subsp. japonica (Rice), this protein is Zinc finger CCCH domain-containing protein 6.